Here is a 156-residue protein sequence, read N- to C-terminus: Nascent polypeptide-associated complex subunit beta (156 aa).

Disordered regions lie at residues 1 to 42 (MPID…KDDT) and 129 to 156 (QANE…AEVE). The NAC-A/B domain maps to 38 to 103 (NKDDTKLHNQ…AQEKNLQELF (66 aa)).

It belongs to the NAC-beta family. Part of the nascent polypeptide-associated complex (NAC), consisting of EGD2 and EGD1. NAC associates with ribosomes via EGD1.

It localises to the cytoplasm. Its subcellular location is the nucleus. Functionally, component of the nascent polypeptide-associated complex (NAC), a dynamic component of the ribosomal exit tunnel, protecting the emerging polypeptides from interaction with other cytoplasmic proteins to ensure appropriate nascent protein targeting. The NAC complex also promotes mitochondrial protein import by enhancing productive ribosome interactions with the outer mitochondrial membrane and blocks the inappropriate interaction of ribosomes translating non-secretory nascent polypeptides with translocation sites in the membrane of the endoplasmic reticulum. EGD1 may act as a transcription factor that exert a negative effect on the expression of several genes that are transcribed by RNA polymerase II. This chain is Nascent polypeptide-associated complex subunit beta (EGD1), found in Candida glabrata (strain ATCC 2001 / BCRC 20586 / JCM 3761 / NBRC 0622 / NRRL Y-65 / CBS 138) (Yeast).